The primary structure comprises 151 residues: Large ribosomal subunit protein eL8 (151 aa).

Belongs to the eukaryotic ribosomal protein eL8 family. Part of the 50S ribosomal subunit. Probably part of the RNase P complex.

The protein localises to the cytoplasm. Multifunctional RNA-binding protein that recognizes the K-turn motif in ribosomal RNA, the RNA component of RNase P, box H/ACA, box C/D and box C'/D' sRNAs. This Pyrobaculum neutrophilum (strain DSM 2338 / JCM 9278 / NBRC 100436 / V24Sta) (Thermoproteus neutrophilus) protein is Large ribosomal subunit protein eL8.